Consider the following 515-residue polypeptide: uncharacterized protein (515 aa).

Disordered regions lie at residues 117–188 (DNIL…RKSQ), 362–453 (RSTS…AESM), and 496–515 (GNAVQEADTESMDDFMDYFN). Composition is skewed to basic and acidic residues over residues 370–380 (KNVESETKQEE), 388–402 (PAEDETPPMKEEVIE), and 428–438 (PIKEIEDKVEP). Residues 502 to 515 (ADTESMDDFMDYFN) are compositionally biased toward acidic residues.

This is an uncharacterized protein from Ostreid herpesvirus 1 (isolate France) (OsHV-1).